The following is a 363-amino-acid chain: MSKDATKEISAPTDAKERSKAIETAMSQIEKAFGKGSIMKLGAESKLDVQVVSTGSLSLDLALGVGGIPRGRITEIYGPESGGKTTLALAIVAQAQKAGGTCAFIDAEHALDPVYARALGVNTDELLVSQPDNGEQALEIMELLVRSGAIDVVVVDSVAALTPRAEIEGDMGDSLPGLQARLMSQALRKLTAILSKTGTAAIFINQVREKIGVMYGNPETTTGGRALKFYASVRLDVRKIGQPTKVGNDAVANTVKIKTVKNKVAAPFKEVELALVYGKGFDQLSDLVGLAADMDIIKKAGSFYSYGDERIGQGKEKTIAYIAERPEMEQEIRDRVMAAIRAGNAGEAPALAPAPAAPEAAEA.

ATP is bound at residue 78-85 (GPESGGKT).

This sequence belongs to the RecA family.

It localises to the cytoplasm. Functionally, can catalyze the hydrolysis of ATP in the presence of single-stranded DNA, the ATP-dependent uptake of single-stranded DNA by duplex DNA, and the ATP-dependent hybridization of homologous single-stranded DNAs. It interacts with LexA causing its activation and leading to its autocatalytic cleavage. Probably involved in base excision repair. Its function is as follows. Following severe irradiation (7 kGy of gamma irradiation) genomic DNA is fragmented. DNA is progressively degraded for the first 1.5 hours after IR, in a step promoted by RecA and counterbalanced by DNA Pol I and Pol III, followed by massive DNA synthesis and genome reassembly in the next hour. Optimal priming of DNA synthesis requires both RecA and RadA, Pol III initiates DNA synthesis while both Pol I and Pol III are required for its continuation. In the absence of RecA the majority of the chromosome is still reconstituted, via either single-strand annealing or non-homologous end joining. The protein is Protein RecA of Deinococcus radiodurans (strain ATCC 13939 / DSM 20539 / JCM 16871 / CCUG 27074 / LMG 4051 / NBRC 15346 / NCIMB 9279 / VKM B-1422 / R1).